Consider the following 513-residue polypeptide: MSWPRIGAYALLAFVAIMALNVTYQFLFRMLNKTRPPLVFHWIPFIGSTIHYGMDPYGFFFSCREKYGDIFTFILLGRPTTVYLGTQGNEFILNGKLKDVNAEEVYSPLTTPVFGSDVVYDCPNSKLIEQKKFIKFGLSQAALEAHVPLIEKEVEDYLAMSPNFHGTSGEVDIPAAMAEITIFTAGSALQGEEVRSKLTTEFAVLYHDLDKGFTPINFMLPWAPLPHNKKRDAAHARMRSIYIDIINKRRNAGDNVPEKLDMIGNLMQCTYKNGQPLPDKEIAHIMITLLMAGQHSSSSISSWIMLRLASQPAVVEELYQEQLANLERTGPNGSLAPLQYKDFDNLPLHQNVIRETLRLHSSIHSLLRKVKNPLPVPGTPYVIPTSHVLLAAPGVTALSDEYFPNAMAWDPHRWETQAPQENNKDDIVDYGYGAMSKGTSSPYLPFGAGRHRCIGEKFAYLNLAVIVATMVRHLRFSNLDGQTGVPDTDYSSLFSGPMKPARIRWERRAAKSG.

Residues 8 to 28 (AYALLAFVAIMALNVTYQFLF) form a helical membrane-spanning segment. 2 N-linked (GlcNAc...) asparagine glycosylation sites follow: Asn32 and Asn332. Cys453 contacts heme.

It belongs to the cytochrome P450 family. Requires heme as cofactor.

It localises to the endoplasmic reticulum membrane. The enzyme catalyses a 14alpha-methyl steroid + 3 reduced [NADPH--hemoprotein reductase] + 3 O2 = a Delta(14) steroid + formate + 3 oxidized [NADPH--hemoprotein reductase] + 4 H2O + 4 H(+). It catalyses the reaction a 14alpha-methyl steroid + reduced [NADPH--hemoprotein reductase] + O2 = a 14alpha-hydroxymethyl steroid + oxidized [NADPH--hemoprotein reductase] + H2O + H(+). It carries out the reaction a 14alpha-hydroxymethyl steroid + reduced [NADPH--hemoprotein reductase] + O2 = a 14alpha-formyl steroid + oxidized [NADPH--hemoprotein reductase] + 2 H2O + H(+). The catalysed reaction is a 14alpha-formyl steroid + reduced [NADPH--hemoprotein reductase] + O2 = a Delta(14) steroid + formate + oxidized [NADPH--hemoprotein reductase] + H2O + 2 H(+). The enzyme catalyses lanosterol + 3 reduced [NADPH--hemoprotein reductase] + 3 O2 = 4,4-dimethyl-5alpha-cholesta-8,14,24-trien-3beta-ol + formate + 3 oxidized [NADPH--hemoprotein reductase] + 4 H2O + 4 H(+). It catalyses the reaction lanosterol + reduced [NADPH--hemoprotein reductase] + O2 = 32-hydroxylanosterol + oxidized [NADPH--hemoprotein reductase] + H2O + H(+). It carries out the reaction 32-hydroxylanosterol + reduced [NADPH--hemoprotein reductase] + O2 = 32-oxolanosterol + oxidized [NADPH--hemoprotein reductase] + 2 H2O + H(+). The catalysed reaction is 32-oxolanosterol + reduced [NADPH--hemoprotein reductase] + O2 = 4,4-dimethyl-5alpha-cholesta-8,14,24-trien-3beta-ol + formate + oxidized [NADPH--hemoprotein reductase] + H2O + 2 H(+). The enzyme catalyses eburicol + 3 reduced [NADPH--hemoprotein reductase] + 3 O2 = 14-demethyleburicol + formate + 3 oxidized [NADPH--hemoprotein reductase] + 4 H2O + 4 H(+). It catalyses the reaction eburicol + reduced [NADPH--hemoprotein reductase] + O2 = 32-hydroxyeburicol + oxidized [NADPH--hemoprotein reductase] + H2O + H(+). It carries out the reaction 32-hydroxyeburicol + reduced [NADPH--hemoprotein reductase] + O2 = 32-oxoeburicol + oxidized [NADPH--hemoprotein reductase] + 2 H2O + H(+). The catalysed reaction is 32-oxoeburicol + reduced [NADPH--hemoprotein reductase] + O2 = 14-demethyleburicol + formate + oxidized [NADPH--hemoprotein reductase] + H2O + 2 H(+). It participates in steroid biosynthesis; sterol biosynthesis. Sterol 14alpha-demethylase, encoded by cyp51A, cyp51B and cyp51C, that plays a critical role in the third module of ergosterol biosynthesis pathway, being ergosterol the major sterol component in fungal membranes that participates in a variety of functions. The third module or late pathway involves the ergosterol synthesis itself through consecutive reactions that mainly occur in the endoplasmic reticulum (ER) membrane. In filamentous fungi, during the initial step of this module, lanosterol (lanosta-8,24-dien-3beta-ol) can be metabolized to eburicol. Sterol 14alpha-demethylase catalyzes the three-step oxidative removal of the 14alpha-methyl group (C-32) of both these sterols in the form of formate, and converts eburicol and lanosterol to 14-demethyleburicol (4,4,24-trimethylergosta-8,14,24(28)-trienol) and 4,4-dimethyl-5alpha-cholesta-8,14,24-trien-3beta-ol, respectively, which are further metabolized by other enzymes in the pathway to ergosterol. Can also use substrates not intrinsic to fungi, such as 24,25-dihydrolanosterol (DHL), producing 4,4'-dimethyl-8,14-cholestadien-3-beta-ol, but at lower rates than the endogenous substrates. Functionally, as a target of azole drugs, plays a crucial role in azole drug susceptibility. In Aspergillus flavus (strain ATCC 200026 / FGSC A1120 / IAM 13836 / NRRL 3357 / JCM 12722 / SRRC 167), this protein is Sterol 14-alpha demethylase.